The following is a 304-amino-acid chain: Phosphoribosylaminoimidazole-succinocarboxamide synthase (304 aa).

Belongs to the SAICAR synthetase family.

It carries out the reaction 5-amino-1-(5-phospho-D-ribosyl)imidazole-4-carboxylate + L-aspartate + ATP = (2S)-2-[5-amino-1-(5-phospho-beta-D-ribosyl)imidazole-4-carboxamido]succinate + ADP + phosphate + 2 H(+). The protein operates within purine metabolism; IMP biosynthesis via de novo pathway; 5-amino-1-(5-phospho-D-ribosyl)imidazole-4-carboxamide from 5-amino-1-(5-phospho-D-ribosyl)imidazole-4-carboxylate: step 1/2. In Streptomyces griseus subsp. griseus (strain JCM 4626 / CBS 651.72 / NBRC 13350 / KCC S-0626 / ISP 5235), this protein is Phosphoribosylaminoimidazole-succinocarboxamide synthase.